Here is a 414-residue protein sequence, read N- to C-terminus: uncharacterized protein (414 aa).

The first 18 residues, 1–18 (MLKRLMLASAILPVVSFA), serve as a signal peptide directing secretion.

This is an uncharacterized protein from Aquifex aeolicus (strain VF5).